We begin with the raw amino-acid sequence, 256 residues long: Beta-fibrinogenase-like (256 aa).

Residues M1–A18 form the signal peptide. Positions Q19–L24 are excised as a propeptide. Residues V25–A247 enclose the Peptidase S1 domain. Cystine bridges form between C31/C161, C49/C65, C96/C254, C140/C208, C172/C187, and C198/C223. A glycan (N-linked (GlcNAc...) asparagine) is linked at N44. Catalysis depends on H64, which acts as the Charge relay system. N-linked (GlcNAc...) asparagine glycans are attached at residues N78 and N101. D108 acts as the Charge relay system in catalysis. An N-linked (GlcNAc...) asparagine glycan is attached at N152. Residue S202 is the Charge relay system of the active site.

It belongs to the peptidase S1 family. Snake venom subfamily. In terms of assembly, monomer. Expressed by the venom gland.

Its subcellular location is the secreted. Snake venom serine protease that has fibrinogenolytic activities by hydrolyzing the beta chain of fibrinogen (FGB). Typical arginine esterase which hydrolyzes esters and amides of arginine. The sequence is that of Beta-fibrinogenase-like from Daboia siamensis (Eastern Russel's viper).